The chain runs to 431 residues: UDP-N-acetylmuramoylalanine--D-glutamate ligase (431 aa).

111–117 (GTDGKST) is an ATP binding site.

This sequence belongs to the MurCDEF family.

Its subcellular location is the cytoplasm. The catalysed reaction is UDP-N-acetyl-alpha-D-muramoyl-L-alanine + D-glutamate + ATP = UDP-N-acetyl-alpha-D-muramoyl-L-alanyl-D-glutamate + ADP + phosphate + H(+). It participates in cell wall biogenesis; peptidoglycan biosynthesis. In terms of biological role, cell wall formation. Catalyzes the addition of glutamate to the nucleotide precursor UDP-N-acetylmuramoyl-L-alanine (UMA). This is UDP-N-acetylmuramoylalanine--D-glutamate ligase from Petrotoga mobilis (strain DSM 10674 / SJ95).